The primary structure comprises 151 residues: Nucleoside diphosphate kinase (151 aa).

Positions 11, 59, 87, 93, 104, and 114 each coordinate ATP. The Pros-phosphohistidine intermediate role is filled by His-117.

This sequence belongs to the NDK family. As to quaternary structure, homotetramer. Mg(2+) serves as cofactor.

It localises to the cytoplasm. It carries out the reaction a 2'-deoxyribonucleoside 5'-diphosphate + ATP = a 2'-deoxyribonucleoside 5'-triphosphate + ADP. The enzyme catalyses a ribonucleoside 5'-diphosphate + ATP = a ribonucleoside 5'-triphosphate + ADP. In terms of biological role, major role in the synthesis of nucleoside triphosphates other than ATP. The ATP gamma phosphate is transferred to the NDP beta phosphate via a ping-pong mechanism, using a phosphorylated active-site intermediate. This is Nucleoside diphosphate kinase from Prochlorococcus marinus (strain NATL1A).